A 357-amino-acid chain; its full sequence is Holliday junction branch migration complex subunit RuvB (357 aa).

Low complexity predominate over residues 1-15; the sequence is MAIQSDSLSSLPDSP. Residues 1–30 are disordered; sequence MAIQSDSLSSLPDSPRIVAPQPVSPNEESI. Positions 13–195 are large ATPase domain (RuvB-L); sequence DSPRIVAPQP…FGIVSRLEFY (183 aa). ATP is bound by residues Leu-34, Arg-35, Gly-76, Lys-79, Thr-80, Thr-81, 142-144, Arg-185, Tyr-195, and Arg-232; that span reads EDF. Thr-80 contacts Mg(2+). Positions 196–266 are small ATPAse domain (RuvB-S); that stretch reads NTDELARIVT…AAGRALAMLD (71 aa). The tract at residues 269 to 357 is head domain (RuvB-H); the sequence is PQGLDVMDRK…SGGTGELFSK (89 aa). DNA contacts are provided by Arg-305, Arg-324, and Arg-329.

The protein belongs to the RuvB family. Homohexamer. Forms an RuvA(8)-RuvB(12)-Holliday junction (HJ) complex. HJ DNA is sandwiched between 2 RuvA tetramers; dsDNA enters through RuvA and exits via RuvB. An RuvB hexamer assembles on each DNA strand where it exits the tetramer. Each RuvB hexamer is contacted by two RuvA subunits (via domain III) on 2 adjacent RuvB subunits; this complex drives branch migration. In the full resolvosome a probable DNA-RuvA(4)-RuvB(12)-RuvC(2) complex forms which resolves the HJ.

The protein localises to the cytoplasm. The catalysed reaction is ATP + H2O = ADP + phosphate + H(+). Its function is as follows. The RuvA-RuvB-RuvC complex processes Holliday junction (HJ) DNA during genetic recombination and DNA repair, while the RuvA-RuvB complex plays an important role in the rescue of blocked DNA replication forks via replication fork reversal (RFR). RuvA specifically binds to HJ cruciform DNA, conferring on it an open structure. The RuvB hexamer acts as an ATP-dependent pump, pulling dsDNA into and through the RuvAB complex. RuvB forms 2 homohexamers on either side of HJ DNA bound by 1 or 2 RuvA tetramers; 4 subunits per hexamer contact DNA at a time. Coordinated motions by a converter formed by DNA-disengaged RuvB subunits stimulates ATP hydrolysis and nucleotide exchange. Immobilization of the converter enables RuvB to convert the ATP-contained energy into a lever motion, pulling 2 nucleotides of DNA out of the RuvA tetramer per ATP hydrolyzed, thus driving DNA branch migration. The RuvB motors rotate together with the DNA substrate, which together with the progressing nucleotide cycle form the mechanistic basis for DNA recombination by continuous HJ branch migration. Branch migration allows RuvC to scan DNA until it finds its consensus sequence, where it cleaves and resolves cruciform DNA. The protein is Holliday junction branch migration complex subunit RuvB of Bordetella pertussis (strain Tohama I / ATCC BAA-589 / NCTC 13251).